Here is a 551-residue protein sequence, read N- to C-terminus: Dihydroxy-acid dehydratase (551 aa).

A Mg(2+)-binding site is contributed by Asp78. Cys119 contacts [2Fe-2S] cluster. Residues Asp120 and Lys121 each coordinate Mg(2+). Lys121 is subject to N6-carboxylysine. Cys191 is a binding site for [2Fe-2S] cluster. Glu442 lines the Mg(2+) pocket. Ser468 serves as the catalytic Proton acceptor.

It belongs to the IlvD/Edd family. As to quaternary structure, homodimer. [2Fe-2S] cluster serves as cofactor. It depends on Mg(2+) as a cofactor.

It carries out the reaction (2R)-2,3-dihydroxy-3-methylbutanoate = 3-methyl-2-oxobutanoate + H2O. It catalyses the reaction (2R,3R)-2,3-dihydroxy-3-methylpentanoate = (S)-3-methyl-2-oxopentanoate + H2O. The protein operates within amino-acid biosynthesis; L-isoleucine biosynthesis; L-isoleucine from 2-oxobutanoate: step 3/4. Its pathway is amino-acid biosynthesis; L-valine biosynthesis; L-valine from pyruvate: step 3/4. In terms of biological role, functions in the biosynthesis of branched-chain amino acids. Catalyzes the dehydration of (2R,3R)-2,3-dihydroxy-3-methylpentanoate (2,3-dihydroxy-3-methylvalerate) into 2-oxo-3-methylpentanoate (2-oxo-3-methylvalerate) and of (2R)-2,3-dihydroxy-3-methylbutanoate (2,3-dihydroxyisovalerate) into 2-oxo-3-methylbutanoate (2-oxoisovalerate), the penultimate precursor to L-isoleucine and L-valine, respectively. In Halothermothrix orenii (strain H 168 / OCM 544 / DSM 9562), this protein is Dihydroxy-acid dehydratase.